We begin with the raw amino-acid sequence, 494 residues long: UDP-N-acetylmuramate--L-alanine ligase (494 aa).

134 to 140 provides a ligand contact to ATP; the sequence is GSHGKTT.

Belongs to the MurCDEF family.

Its subcellular location is the cytoplasm. It catalyses the reaction UDP-N-acetyl-alpha-D-muramate + L-alanine + ATP = UDP-N-acetyl-alpha-D-muramoyl-L-alanine + ADP + phosphate + H(+). The protein operates within cell wall biogenesis; peptidoglycan biosynthesis. In terms of biological role, cell wall formation. This is UDP-N-acetylmuramate--L-alanine ligase from Prochlorococcus marinus (strain NATL1A).